The primary structure comprises 193 residues: Ion-translocating oxidoreductase complex subunit A (193 aa).

Transmembrane regions (helical) follow at residues 5–25 (LLLL…FLGL), 39–59 (IGMG…AYLV), 67–87 (LGIE…VVQF), 102–122 (LLGI…VALL), 134–154 (IIYG…FASM), and 171–191 (SIAM…TGLV).

Belongs to the NqrDE/RnfAE family. The complex is composed of six subunits: RnfA, RnfB, RnfC, RnfD, RnfE and RnfG.

Its subcellular location is the cell inner membrane. Functionally, part of a membrane-bound complex that couples electron transfer with translocation of ions across the membrane. The protein is Ion-translocating oxidoreductase complex subunit A of Vibrio cholerae serotype O1 (strain ATCC 39315 / El Tor Inaba N16961).